The primary structure comprises 428 residues: Cytochrome bc complex cytochrome b subunit (428 aa).

Composition is skewed to low complexity over residues 1-15 (MAEN…TAPA) and 21-52 (APGA…AAAP). A disordered region spans residues 1–72 (MAENTPKPAA…RPDPNPFKDS (72 aa)). Basic and acidic residues predominate over residues 59–72 (PPVDRPDPNPFKDS). Residues 110–130 (YFGGLGLFFFVIQILTGLLLL) traverse the membrane as a helical segment. Heme b contacts are provided by His161 and His175. The next 6 helical transmembrane spans lie at 162–182 (AWSA…TFFM), 193–213 (WVSG…GYLL), 260–280 (LHVV…LTLV), 312–331 (GIGW…MFPW), 369–389 (ELLA…VPFI), and 401–421 (IFTI…YRVY). The heme b site is built by His261 and His276.

This sequence belongs to the cytochrome b family. Requires heme b as cofactor.

It is found in the cell inner membrane. Functionally, component of the green S-bacteria bc complex, which consists of the Rieske protein and cytochrome b subunit but appears to lack a cytochrome c1-equivalent. This complex has a comparatively low redox potential. This Chlorobaculum thiosulfatiphilum (Chlorobium limicola f.sp. thiosulfatophilum) protein is Cytochrome bc complex cytochrome b subunit (petB).